The sequence spans 691 residues: Choline transporter-like 1 (691 aa).

Positions 1-10 (MGCAESKDGE) are enriched in basic and acidic residues. Residues 1-20 (MGCAESKDGEGEAQNNRPKY) are disordered. 3 helical membrane-spanning segments follow: residues 28–48 (WLAI…FSFV), 205–225 (WHII…LVTM), and 232–252 (IVSW…TVAL). Asn261 is a glycosylation site (N-linked (GlcNAc...) asparagine). Helical transmembrane passes span 282 to 302 (VLTL…VIYF) and 332 to 352 (LLAF…IICL). The N-linked (GlcNAc...) asparagine glycan is linked to Asn385. Helical transmembrane passes span 408–428 (SMFW…FACQ), 527–547 (VVAI…NAMA), 562–582 (FILF…GIVL), and 591–611 (FYMA…HIIL).

It belongs to the CTL (choline transporter-like) family.

The protein localises to the membrane. The protein is Choline transporter-like 1 of Drosophila melanogaster (Fruit fly).